Here is a 208-residue protein sequence, read N- to C-terminus: Uracil phosphoribosyltransferase (208 aa).

5-phospho-alpha-D-ribose 1-diphosphate-binding positions include Arg-78, Arg-103, and 130–138 (DPMLATGGS). Uracil is bound by residues Ile-193 and 198–200 (GDA). Asp-199 is a 5-phospho-alpha-D-ribose 1-diphosphate binding site.

This sequence belongs to the UPRTase family. Mg(2+) is required as a cofactor.

The catalysed reaction is UMP + diphosphate = 5-phospho-alpha-D-ribose 1-diphosphate + uracil. The protein operates within pyrimidine metabolism; UMP biosynthesis via salvage pathway; UMP from uracil: step 1/1. Its activity is regulated as follows. Allosterically activated by GTP. Catalyzes the conversion of uracil and 5-phospho-alpha-D-ribose 1-diphosphate (PRPP) to UMP and diphosphate. The polypeptide is Uracil phosphoribosyltransferase (Shewanella baltica (strain OS223)).